The following is a 147-amino-acid chain: Thyrotropin subunit beta (147 aa).

The N-terminal stretch at 1–20 (MELSVAMYGLLCLLFSQAVP) is a signal peptide. Intrachain disulfides connect C22-C72, C36-C87, C39-C127, C47-C103, C51-C105, and C108-C115. N43 carries N-linked (GlcNAc...) asparagine glycosylation.

It belongs to the glycoprotein hormones subunit beta family. In terms of assembly, heterodimer of a common alpha chain and a unique beta chain which confers biological specificity to thyrotropin, lutropin, follitropin and gonadotropin. As to expression, pituitary gland. Higher levels seen in immature fishes than the mature fishes.

It localises to the secreted. Its function is as follows. Indispensable for the control of thyroid structure and metabolism. May play some role in the biological processes of the immature fishes. In Oncorhynchus mykiss (Rainbow trout), this protein is Thyrotropin subunit beta (tshb).